The following is a 245-amino-acid chain: Carboxy-S-adenosyl-L-methionine synthase (245 aa).

S-adenosyl-L-methionine contacts are provided by residues Tyr-42, 67-69 (GCS), 92-93 (DN), 120-121 (DI), Asn-135, and Arg-202.

This sequence belongs to the class I-like SAM-binding methyltransferase superfamily. Cx-SAM synthase family. Homodimer.

It carries out the reaction prephenate + S-adenosyl-L-methionine = carboxy-S-adenosyl-L-methionine + 3-phenylpyruvate + H2O. Catalyzes the conversion of S-adenosyl-L-methionine (SAM) to carboxy-S-adenosyl-L-methionine (Cx-SAM). The sequence is that of Carboxy-S-adenosyl-L-methionine synthase from Vibrio parahaemolyticus serotype O3:K6 (strain RIMD 2210633).